A 184-amino-acid chain; its full sequence is Photosystem I assembly protein Ycf4 (184 aa).

Helical transmembrane passes span 22–42 (FCWA…GTSS) and 57–77 (ILFF…LFIS).

This sequence belongs to the Ycf4 family.

The protein resides in the plastid. The protein localises to the chloroplast thylakoid membrane. Functionally, seems to be required for the assembly of the photosystem I complex. This Liriodendron tulipifera (Tuliptree) protein is Photosystem I assembly protein Ycf4.